A 173-amino-acid chain; its full sequence is Spermidine N(1)-acetyltransferase (173 aa).

The region spanning 5 to 162 (LTLRALERGD…GRYQDVKRMY (158 aa)) is the N-acetyltransferase domain. Spermine contacts are provided by residues Met28, Glu33, Glu41, and 49-52 (HIHD). Glu33 contacts Mg(2+). Positions 33 and 41 each coordinate spermidine. Glu75 lines the Mg(2+) pocket. 84 to 86 (EFQ) provides a ligand contact to spermine. Residues 87 to 89 (III), 94 to 100 (QGKGFAR), and 127 to 136 (NPKAVHLYEE) contribute to the acetyl-CoA site. Tyr134 functions as the Proton donor in the catalytic mechanism.

The protein belongs to the acetyltransferase family. Homododecamer; dimer of hexamers. Exists in solution in a variety of protein homooligomeric states including dodecamers in an open state. The presence of the polyamines spermidine or spermine shifts the equilibrium to dodecamers and induces the formation of the closed, symmetric dodecamers.

The protein resides in the cytoplasm. The enzyme catalyses an alkane-alpha,omega-diamine + acetyl-CoA = an N-acetylalkane-alpha,omega-diamine + CoA + H(+). It carries out the reaction spermidine + acetyl-CoA = N(1)-acetylspermidine + CoA + H(+). The catalysed reaction is spermidine + acetyl-CoA = N(8)-acetylspermidine + CoA + H(+). It catalyses the reaction spermine + acetyl-CoA = N(1)-acetylspermine + CoA + H(+). It participates in amine and polyamine degradation; spermidine degradation. Its pathway is amine and polyamine degradation; spermine degradation. Allosterically regulated by polyamines. Polyamines trigger conformational changes and induce the symmetric closed dodecameric state of the protein when they bind to their allosteric sites. Its function is as follows. Involved in the protection against polyamine toxicity by regulating their concentration. Catalyzes the transfer of an acetyl group from acetyl coenzyme A (AcCoA) to the primary amino groups of spermidine to yield N(1)- and N(8)-acetylspermidine. It can use polyamines such as spermine and N(1)-acetylspermine, but not putrescine or cadaverine. This chain is Spermidine N(1)-acetyltransferase (speG), found in Vibrio cholerae serotype O1 (strain ATCC 39315 / El Tor Inaba N16961).